A 396-amino-acid polypeptide reads, in one-letter code: GTPase Obg (396 aa).

An Obg domain is found at 1–159; the sequence is MKFVDEATIY…RNIRLELKVL (159 aa). The region spanning 160–333 is the OBG-type G domain; sequence ADVGLLGLPN…LCQDIMTWIE (174 aa). Residues 166–173, 191–195, 213–216, 283–286, and 314–316 contribute to the GTP site; these read GLPNAGKS, FTTLV, DIPG, NKTD, and SAL. 2 residues coordinate Mg(2+): serine 173 and threonine 193. Disordered stretches follow at residues 337-356 and 373-396; these read EEERDDPEVAEADRLNREQM and LARKKAKESDDDDDDEDVEVFYAP. Over residues 347 to 356 the composition is skewed to basic and acidic residues; sequence EADRLNREQM. Residues 381 to 396 are compositionally biased toward acidic residues; it reads SDDDDDDEDVEVFYAP.

This sequence belongs to the TRAFAC class OBG-HflX-like GTPase superfamily. OBG GTPase family. In terms of assembly, monomer. It depends on Mg(2+) as a cofactor.

It is found in the cytoplasm. Functionally, an essential GTPase which binds GTP, GDP and possibly (p)ppGpp with moderate affinity, with high nucleotide exchange rates and a fairly low GTP hydrolysis rate. Plays a role in control of the cell cycle, stress response, ribosome biogenesis and in those bacteria that undergo differentiation, in morphogenesis control. This is GTPase Obg from Hahella chejuensis (strain KCTC 2396).